The sequence spans 320 residues: HPr kinase/phosphorylase (320 aa).

Active-site residues include His-139 and Lys-160. ATP is bound at residue 154-161; sequence GDSGVGKS. Ser-161 lines the Mg(2+) pocket. Asp-178 acts as the Proton acceptor; for phosphorylation activity. Proton donor; for dephosphorylation activity in catalysis. Positions 202–211 are important for the catalytic mechanism of both phosphorylation and dephosphorylation; sequence MEIRGIGIID. Glu-203 is a binding site for Mg(2+). Arg-244 is a catalytic residue. The tract at residues 265-270 is important for the catalytic mechanism of dephosphorylation; sequence PVKTGR.

This sequence belongs to the HPrK/P family. As to quaternary structure, homohexamer. The cofactor is Mg(2+).

The catalysed reaction is [HPr protein]-L-serine + ATP = [HPr protein]-O-phospho-L-serine + ADP + H(+). It catalyses the reaction [HPr protein]-O-phospho-L-serine + phosphate + H(+) = [HPr protein]-L-serine + diphosphate. Functionally, catalyzes the ATP- as well as the pyrophosphate-dependent phosphorylation of a specific serine residue in HPr, a phosphocarrier protein of the phosphoenolpyruvate-dependent sugar phosphotransferase system (PTS). HprK/P also catalyzes the pyrophosphate-producing, inorganic phosphate-dependent dephosphorylation (phosphorolysis) of seryl-phosphorylated HPr (P-Ser-HPr). The two antagonistic activities of HprK/P are regulated by several intracellular metabolites, which change their concentration in response to the absence or presence of rapidly metabolisable carbon sources (glucose, fructose, etc.) in the growth medium. Therefore, by controlling the phosphorylation state of HPr, HPrK/P is a sensor enzyme that plays a major role in the regulation of carbon metabolism and sugar transport: it mediates carbon catabolite repression (CCR), and regulates PTS-catalyzed carbohydrate uptake and inducer exclusion. The chain is HPr kinase/phosphorylase from Limosilactobacillus reuteri (strain DSM 20016) (Lactobacillus reuteri).